The following is a 364-amino-acid chain: tRNA-specific 2-thiouridylase MnmA (364 aa).

ATP contacts are provided by residues Ala6 to Ser13 and Leu32. The Nucleophile role is filled by Cys101. Residues Cys101 and Cys193 are joined by a disulfide bond. Gly125 provides a ligand contact to ATP. Residues Lys143 to Gln145 form an interaction with tRNA region. Residue Cys193 is the Cysteine persulfide intermediate of the active site.

It belongs to the MnmA/TRMU family.

It localises to the cytoplasm. The catalysed reaction is S-sulfanyl-L-cysteinyl-[protein] + uridine(34) in tRNA + AH2 + ATP = 2-thiouridine(34) in tRNA + L-cysteinyl-[protein] + A + AMP + diphosphate + H(+). Catalyzes the 2-thiolation of uridine at the wobble position (U34) of tRNA, leading to the formation of s(2)U34. The chain is tRNA-specific 2-thiouridylase MnmA from Rhodococcus jostii (strain RHA1).